Reading from the N-terminus, the 421-residue chain is Tyrosine--tRNA ligase (421 aa).

Tyr-38 is an L-tyrosine binding site. The short motif at 43-52 is the 'HIGH' region element; sequence PTGDSLHIGH. L-tyrosine-binding residues include Tyr-169 and Gln-173. The 'KMSKS' region signature appears at 231–235; sequence KFGKS. Lys-234 provides a ligand contact to ATP. An S4 RNA-binding domain is found at 353–419; that stretch reads KNLVDFLVDT…GKKKYTLVHI (67 aa).

This sequence belongs to the class-I aminoacyl-tRNA synthetase family. TyrS type 1 subfamily. As to quaternary structure, homodimer.

Its subcellular location is the cytoplasm. It carries out the reaction tRNA(Tyr) + L-tyrosine + ATP = L-tyrosyl-tRNA(Tyr) + AMP + diphosphate + H(+). Its function is as follows. Catalyzes the attachment of tyrosine to tRNA(Tyr) in a two-step reaction: tyrosine is first activated by ATP to form Tyr-AMP and then transferred to the acceptor end of tRNA(Tyr). The sequence is that of Tyrosine--tRNA ligase from Lactobacillus delbrueckii subsp. bulgaricus (strain ATCC BAA-365 / Lb-18).